Consider the following 208-residue polypeptide: LexA repressor (208 aa).

Positions 29 to 49 (VREICSAVGLSSTSTVHGHIS) form a DNA-binding region, H-T-H motif. Active-site for autocatalytic cleavage activity residues include Ser-129 and Lys-167.

It belongs to the peptidase S24 family. As to quaternary structure, homodimer.

It catalyses the reaction Hydrolysis of Ala-|-Gly bond in repressor LexA.. Its function is as follows. Represses a number of genes involved in the response to DNA damage (SOS response), including recA and lexA. In the presence of single-stranded DNA, RecA interacts with LexA causing an autocatalytic cleavage which disrupts the DNA-binding part of LexA, leading to derepression of the SOS regulon and eventually DNA repair. This Limosilactobacillus reuteri (strain DSM 20016) (Lactobacillus reuteri) protein is LexA repressor.